The primary structure comprises 381 residues: ADP,ATP carrier protein 1, mitochondrial (381 aa).

Residues 1-70 constitute a mitochondrion transit peptide; the sequence is MVDQVQHPTI…ATTASPVFVQ (70 aa). Solcar repeat units follow at residues 78–171, 183–276, and 284–370; these read TNFA…FKRL, KWFA…VKPV, and DSFF…LQLI. The next 5 membrane-spanning stretches (helical) occupy residues 80 to 107, 148 to 172, 181 to 201, 252 to 273, and 287 to 307; these read FALDFLMGGVSAAVSKTAAAPIERVKLL, TANVIRYFPTQALNFAFKDYFKRLF, YWKWFAGNLASGGAAGASSLL, FNISCVGIIVYRGLYFGLYDSV, and FASFALGWVITNGAGLASYPI. Positions 153 and 165 each coordinate ADP. Residue Arg311 coordinates ADP. The tract at residues 311 to 316 is important for transport activity; it reads RRRMMM. Positions 311 to 316 match the Nucleotide carrier signature motif motif; sequence RRRMMM. A helical membrane pass occupies residues 347–367; it reads AGANILRAVAGAGVLSGYDKL.

It belongs to the mitochondrial carrier (TC 2.A.29) family. Monomer.

Its subcellular location is the mitochondrion inner membrane. It carries out the reaction ADP(in) + ATP(out) = ADP(out) + ATP(in). Its activity is regulated as follows. The matrix-open state (m-state) is inhibited by the membrane-permeable bongkrekic acid (BKA). The cytoplasmic-open state (c-state) is inhibited by the membrane-impermeable toxic inhibitor carboxyatractyloside (CATR). Its function is as follows. ADP:ATP antiporter that mediates import of ADP into the mitochondrial matrix for ATP synthesis, and export of ATP out to fuel the cell. Cycles between the cytoplasmic-open state (c-state) and the matrix-open state (m-state): operates by the alternating access mechanism with a single substrate-binding site intermittently exposed to either the cytosolic (c-state) or matrix (m-state) side of the inner mitochondrial membrane. This chain is ADP,ATP carrier protein 1, mitochondrial (AAC1), found in Arabidopsis thaliana (Mouse-ear cress).